A 268-amino-acid chain; its full sequence is 4-hydroxy-tetrahydrodipicolinate reductase (268 aa).

NAD(+) contacts are provided by residues 10-15 (GASGRM) and Asp36. An NADP(+)-binding site is contributed by Arg37. NAD(+) contacts are provided by residues 99–101 (GTT) and 123–126 (SANM). Catalysis depends on His156, which acts as the Proton donor/acceptor. His157 contributes to the (S)-2,3,4,5-tetrahydrodipicolinate binding site. Residue Lys160 is the Proton donor of the active site. 166–167 (GT) provides a ligand contact to (S)-2,3,4,5-tetrahydrodipicolinate.

It belongs to the DapB family.

Its subcellular location is the cytoplasm. The enzyme catalyses (S)-2,3,4,5-tetrahydrodipicolinate + NAD(+) + H2O = (2S,4S)-4-hydroxy-2,3,4,5-tetrahydrodipicolinate + NADH + H(+). It catalyses the reaction (S)-2,3,4,5-tetrahydrodipicolinate + NADP(+) + H2O = (2S,4S)-4-hydroxy-2,3,4,5-tetrahydrodipicolinate + NADPH + H(+). Its pathway is amino-acid biosynthesis; L-lysine biosynthesis via DAP pathway; (S)-tetrahydrodipicolinate from L-aspartate: step 4/4. In terms of biological role, catalyzes the conversion of 4-hydroxy-tetrahydrodipicolinate (HTPA) to tetrahydrodipicolinate. The protein is 4-hydroxy-tetrahydrodipicolinate reductase of Burkholderia thailandensis (strain ATCC 700388 / DSM 13276 / CCUG 48851 / CIP 106301 / E264).